We begin with the raw amino-acid sequence, 306 residues long: HORMA domain-containing protein 2 (306 aa).

Residues 29–232 (HESLVVVKKL…SGFHSMKVKV (204 aa)) form the HORMA domain. A Phosphoserine modification is found at S271.

In terms of assembly, interacts with HORMAD1. Phosphorylated in a SPO11-dependent manner. As to expression, specifically expressed in meiotic germ cells.

The protein localises to the nucleus. It localises to the chromosome. Functionally, essential for synapsis surveillance during meiotic prophase via the recruitment of ATR activity. Plays a key role in the male mid-pachytene checkpoint and the female meiotic prophase checkpoint: required for efficient build-up of ATR activity on unsynapsed chromosome regions, a process believed to form the basis of meiotic silencing of unsynapsed chromatin (MSUC) and meiotic prophase quality control in both sexes. Required for the DNA double-strand break-independent, BRCA1-dependent activation of ATR on the sex chromosomes that is essential for normal sex body formation. This chain is HORMA domain-containing protein 2 (Hormad2), found in Mus musculus (Mouse).